A 124-amino-acid polypeptide reads, in one-letter code: Acidic phospholipase A2 (124 aa).

Intrachain disulfides connect Cys-26–Cys-116, Cys-28–Cys-44, Cys-43–Cys-95, Cys-49–Cys-124, Cys-50–Cys-88, Cys-57–Cys-81, and Cys-75–Cys-86. The Ca(2+) site is built by Tyr-27, Gly-29, and Gly-31. His-47 is an active-site residue. Residue Asp-48 participates in Ca(2+) binding. The active site involves Asp-89.

It belongs to the phospholipase A2 family. Group II subfamily. D49 sub-subfamily. Ca(2+) is required as a cofactor. In terms of tissue distribution, expressed by the venom gland.

Its subcellular location is the secreted. It carries out the reaction a 1,2-diacyl-sn-glycero-3-phosphocholine + H2O = a 1-acyl-sn-glycero-3-phosphocholine + a fatty acid + H(+). Its function is as follows. Snake venom phospholipase A2 (PLA2) that inhibits ADP-induced platelet aggregation. PLA2 catalyzes the calcium-dependent hydrolysis of the 2-acyl groups in 3-sn-phosphoglycerides. This is Acidic phospholipase A2 from Gloydius ussuriensis (Ussuri mamushi).